Reading from the N-terminus, the 186-residue chain is MKTAHEVRPGNVIMFEGSPWVVQKTETTRSGRNAAIVKLKLKNLLLNSGTETTFKGEDKIDDIILDRLDCTYSYFADPMYVFMDAEYNQYDVEAENLGDAAAYIVDGMEETCQVTFYEGKAISVEMPTTIVREVIYTEPSARGDTSGKVMKPATITGGGTISVADFVKVGDKIEIDTRTGEFKKRV.

Belongs to the elongation factor P family.

It localises to the cytoplasm. It participates in protein biosynthesis; polypeptide chain elongation. In terms of biological role, involved in peptide bond synthesis. Stimulates efficient translation and peptide-bond synthesis on native or reconstituted 70S ribosomes in vitro. Probably functions indirectly by altering the affinity of the ribosome for aminoacyl-tRNA, thus increasing their reactivity as acceptors for peptidyl transferase. The protein is Elongation factor P of Shewanella sp. (strain ANA-3).